The primary structure comprises 207 residues: High frequency lysogenization protein HflD homolog (207 aa).

This sequence belongs to the HflD family.

Its subcellular location is the cytoplasm. The protein localises to the cell inner membrane. The protein is High frequency lysogenization protein HflD homolog of Cellvibrio japonicus (strain Ueda107) (Pseudomonas fluorescens subsp. cellulosa).